A 1070-amino-acid polypeptide reads, in one-letter code: MMFSRVMQLALICAVTCEDNPCLWERFTNSRDIEFMIPVVNLSTSRRLSMSQRICMVSMGKHWSRIFSEGEEDRGMKDLDPLLMSSLNWRGTAKTRSSNSFNFDILDGIFLGFLDLVKWGEEADRHTPIHPECIKSKVCGFMTASGPRIKTCTGKFRGADRHGHCTNRATPHEATNVISVGVQHAQEANQVDEHEARYISEARKSINPEICSIDGVEINQCDLASPGRWLMLHYASFRLQEGSLVYLSPGLNIKWSQINVPASDFYCINVSDHLNTHYRPCEVNCTDNCQGDELYCSVHQCARSAECKCSFIGSRGMAEVQIGDRWFKPAVVGSQQFFVKEDVPVLQQPSADCTTCSMTCTAEGIAISSIKDELKDVTVCVEGFCSTRVSKGSKVWKIEFHNQYPSSGSVALARGTTVSGETFELTAECGRRTGCEQINCLFCREMLSNPQCYPYGKWFLLFLILATLYIIVALLKTIMRIFMACLSVLYGPFIIIIKISRCLGRLGKRKGERTYVRLMEALDDERKPEVVRAPVSLGRTKQPRIVLFIVLALLVHMALCCDESRLVEETSVTCNPGPDNIFSCSTKEMITVKELRAGKTICVSLKGPGGSLSSPIKIKMLDIVGRSDLLDIYFTFNGHANCKSVRRCRWAGSCGNSGCLGVGKEDYDRELGDQESSLHPNWRDCYDGCGGAACGCFNAAPSCIFLKRYVTNADSRVFKVFKPSAWFLSTKIVVETTSHKEDVTLKSGEAKVIDKVSFHYRTDKNLFAGMSIPPIVTEVKREGKPLSFFLENQGQHPKCKDENSARTSSASNCIVDQNTISANVRVDDVSCRSNLVSISGMSTLKPLPQRVGDFLIQLHNDEPVLLATGDSGVVEGELQIDLSHKKISIKVDTTVCRGTVKELKGCVGCTKGAFASLEIHSTSAGSASLQCSLSSCYMEVQKGVNNVNCSLRFSKAVVEETCVLACSGSKEQLSIKGNLIIGGDFKKLTEDSATSFSHTDSKDTRIHLQTGLMNWLDTLFGASLLGKILGIGLAILSPFILILILRWILRVVLRRSRIRREPKYEMAKYS.

Positions 1–17 (MMFSRVMQLALICAVTC) are cleaved as a signal peptide. Residues 18 to 457 (EDNPCLWERF…SNPQCYPYGK (440 aa)) are Lumenal-facing. Intrachain disulfides connect Cys-22/Cys-55, Cys-152/Cys-165, Cys-211/Cys-221, Cys-267/Cys-309, Cys-296/Cys-301, Cys-353/Cys-356, Cys-360/Cys-429, and Cys-380/Cys-385. Asn-269 is a glycosylation site (N-linked (GlcNAc...) asparagine; by host). Residues 458–478 (WFLLFLILATLYIIVALLKTI) traverse the membrane as a helical segment. Over 479 to 536 (MRIFMACLSVLYGPFIIIIKISRCLGRLGKRKGERTYVRLMEALDDERKPEVVRAPVS) the chain is Cytoplasmic. The tract at residues 480-522 (RIFMACLSVLYGPFIIIIKISRCLGRLGKRKGERTYVRLMEAL) is golgi retention signal. Residues 541 to 560 (KQPRIVLFIVLALLVHMALC) form an internal signal sequence for glycoprotein C region. Residues 550–560 (VLALLVHMALC) constitute a propeptide that is removed on maturation. Residues 550–1023 (VLALLVHMAL…NWLDTLFGAS (474 aa)) are Lumenal-facing. 10 disulfides stabilise this stretch: Cys-561-Cys-602, Cys-574-Cys-584, Cys-642-Cys-831, Cys-648-Cys-696, Cys-654-Cys-703, Cys-659-Cys-685, Cys-689-Cys-694, Cys-799-Cys-813, Cys-896-Cys-966, and Cys-906-Cys-909. Residues 648 to 654 (CRWAGSC) form a fusion loop region. Residues 690-701 (GGAACGCFNAAP) are fusion loop. A helical transmembrane segment spans residues 1024–1044 (LLGKILGIGLAILSPFILILI). Residues 1045–1070 (LRWILRVVLRRSRIRREPKYEMAKYS) are Cytoplasmic-facing.

The protein belongs to the phlebovirus envelope glycoprotein family. In terms of assembly, heterodimer with glycoprotein C. Heterodimer with glycoprotein N. Homotrimer (postfusion). Post-translationally, specific enzymatic cleavages in vivo yield mature proteins Glycoprotein C, and Glycoprotein N. Glycosylated. In terms of processing, palmitoylated.

The protein resides in the virion membrane. It is found in the host Golgi apparatus membrane. The protein localises to the host endoplasmic reticulum membrane. Its function is as follows. Structural component of the virion that interacts with glycoprotein C. It shields the hydrophobic fusion loops of the glycoprotein C, preventing premature fusion. The glycoprotein protrusions are arranged on an icosahedral lattice, with T=12 triangulation. They are able to attach the virion to the host cell receptor CD209/DC-SIGN and to promote fusion of membranes with the late endosome after endocytosis of the virion. Plays a role in the packaging of ribonucleoproteins during virus assembly. In terms of biological role, structural component of the virion that interacts with glycoprotein N. Acts as a class II fusion protein that is activated upon acidification and subsequent repositioning of the glycoprotein N. The glycoprotein protrusions are arranged on an icosahedral lattice, with T=12 triangulation. They are able to attach the virion to the host cell receptor CD209/DC-SIGN and to promote fusion of membranes with the late endosome after endocytosis of the virion. This chain is Envelopment polyprotein (GP), found in Amblyomma variegatum (Tropical bont tick).